A 244-amino-acid polypeptide reads, in one-letter code: 5-oxoprolinase subunit A (244 aa).

This sequence belongs to the LamB/PxpA family. As to quaternary structure, forms a complex composed of PxpA, PxpB and PxpC.

It carries out the reaction 5-oxo-L-proline + ATP + 2 H2O = L-glutamate + ADP + phosphate + H(+). Catalyzes the cleavage of 5-oxoproline to form L-glutamate coupled to the hydrolysis of ATP to ADP and inorganic phosphate. The chain is 5-oxoprolinase subunit A from Salmonella schwarzengrund (strain CVM19633).